The primary structure comprises 453 residues: uncharacterized protein (453 aa).

[4Fe-4S] cluster is bound by residues cysteine 74, cysteine 80, cysteine 83, and cysteine 162. S-adenosyl-L-methionine-binding residues include glutamine 286, tyrosine 315, glutamate 336, and aspartate 384. Cysteine 411 functions as the Nucleophile in the catalytic mechanism.

Belongs to the class I-like SAM-binding methyltransferase superfamily. RNA M5U methyltransferase family.

This is an uncharacterized protein from Staphylococcus aureus (strain COL).